The chain runs to 148 residues: 3-hydroxyacyl-[acyl-carrier-protein] dehydratase FabZ (148 aa).

Residue H50 is part of the active site.

This sequence belongs to the thioester dehydratase family. FabZ subfamily.

The protein resides in the cytoplasm. The catalysed reaction is a (3R)-hydroxyacyl-[ACP] = a (2E)-enoyl-[ACP] + H2O. In terms of biological role, involved in unsaturated fatty acids biosynthesis. Catalyzes the dehydration of short chain beta-hydroxyacyl-ACPs and long chain saturated and unsaturated beta-hydroxyacyl-ACPs. The polypeptide is 3-hydroxyacyl-[acyl-carrier-protein] dehydratase FabZ (Lactobacillus helveticus (strain DPC 4571)).